We begin with the raw amino-acid sequence, 72 residues long: Large ribosomal subunit protein uL29 (72 aa).

The protein belongs to the universal ribosomal protein uL29 family.

This chain is Large ribosomal subunit protein uL29, found in Chlamydia felis (strain Fe/C-56) (Chlamydophila felis).